We begin with the raw amino-acid sequence, 110 residues long: uncharacterized protein (110 aa).

This is an uncharacterized protein from Homo sapiens (Human).